The following is a 918-amino-acid chain: Dual serine/threonine and tyrosine protein kinase (918 aa).

Basic and acidic residues predominate over residues 1–19 (MQKDGTRSSRRMEEGDRRN). The interval 1–29 (MQKDGTRSSRRMEEGDRRNGSTGSSGSVS) is disordered. Residues 643 to 897 (PRIGRELGRG…PLMGIVQPML (255 aa)) form the Protein kinase domain. ATP-binding positions include 649–657 (LGRGQYGVV) and lysine 672. Catalysis depends on aspartate 768, which acts as the Proton acceptor.

This sequence belongs to the protein kinase superfamily. Ser/Thr protein kinase family.

Its subcellular location is the cytoplasm. The protein resides in the cell membrane. It localises to the apical cell membrane. The protein localises to the basolateral cell membrane. It is found in the cell junction. The catalysed reaction is L-seryl-[protein] + ATP = O-phospho-L-seryl-[protein] + ADP + H(+). The enzyme catalyses L-threonyl-[protein] + ATP = O-phospho-L-threonyl-[protein] + ADP + H(+). It catalyses the reaction L-tyrosyl-[protein] + ATP = O-phospho-L-tyrosyl-[protein] + ADP + H(+). Functionally, may act as a positive regulator of ERK phosphorylation downstream of fibroblast growth factor-receptor activation. May induce both caspase-dependent apoptosis and caspase-independent cell death. May play a role in the embryonic development. The polypeptide is Dual serine/threonine and tyrosine protein kinase (dstyk) (Xenopus tropicalis (Western clawed frog)).